The chain runs to 505 residues: Histidine ammonia-lyase (505 aa).

Residues 141-143 (ASG) constitute a cross-link (5-imidazolinone (Ala-Gly)). Ser-142 is subject to 2,3-didehydroalanine (Ser).

This sequence belongs to the PAL/histidase family. In terms of processing, contains an active site 4-methylidene-imidazol-5-one (MIO), which is formed autocatalytically by cyclization and dehydration of residues Ala-Ser-Gly.

Its subcellular location is the cytoplasm. It catalyses the reaction L-histidine = trans-urocanate + NH4(+). The protein operates within amino-acid degradation; L-histidine degradation into L-glutamate; N-formimidoyl-L-glutamate from L-histidine: step 1/3. This is Histidine ammonia-lyase from Bacillus anthracis.